The sequence spans 101 residues: Small ribosomal subunit protein bS18c (101 aa).

The span at 1 to 19 (MDKSKQPFRKSKRSFRRRL) shows a compositional bias: basic residues. The interval 1-26 (MDKSKQPFRKSKRSFRRRLPPIGSGD) is disordered.

It belongs to the bacterial ribosomal protein bS18 family. In terms of assembly, part of the 30S ribosomal subunit.

Its subcellular location is the plastid. It is found in the chloroplast. This Phalaenopsis aphrodite subsp. formosana (Moth orchid) protein is Small ribosomal subunit protein bS18c.